The sequence spans 603 residues: UPF0313 protein MJ1155 (603 aa).

In terms of domain architecture, Radical SAM core spans 285–557 (GIVPVQFSVV…KIQKAICLYR (273 aa)). Positions 299, 303, and 306 each coordinate [4Fe-4S] cluster.

The protein belongs to the UPF0313 family. The cofactor is [4Fe-4S] cluster.

The polypeptide is UPF0313 protein MJ1155 (Methanocaldococcus jannaschii (strain ATCC 43067 / DSM 2661 / JAL-1 / JCM 10045 / NBRC 100440) (Methanococcus jannaschii)).